We begin with the raw amino-acid sequence, 384 residues long: Na(+)/H(+) antiporter NhaA (384 aa).

11 helical membrane passes run 9–29, 58–78, 94–114, 124–144, 153–173, 179–199, 204–224, 256–276, 285–305, 325–345, and 357–377; these read NLET…IIIA, LLLW…GLEI, LVPA…FIFF, GWAI…SLLG, ILLT…IALF, SLLS…LNYF, ISVF…SGVH, VVFL…FVGL, VVLG…FLSL, VYGI…IGSL, and MVKI…FLVL.

The protein belongs to the NhaA Na(+)/H(+) (TC 2.A.33) antiporter family.

The protein localises to the cell inner membrane. The catalysed reaction is Na(+)(in) + 2 H(+)(out) = Na(+)(out) + 2 H(+)(in). Its function is as follows. Na(+)/H(+) antiporter that extrudes sodium in exchange for external protons. The chain is Na(+)/H(+) antiporter NhaA from Legionella pneumophila (strain Lens).